The sequence spans 113 residues: UPF0321 protein C569.02c (113 aa).

The N-terminal stretch at 1 to 17 (MLLLFCICCAFIKLVLA) is a signal peptide. N-linked (GlcNAc...) asparagine glycans are attached at residues Asn20, Asn39, and Asn65.

It belongs to the UPF0321 family.

This chain is UPF0321 protein C569.02c, found in Schizosaccharomyces pombe (strain 972 / ATCC 24843) (Fission yeast).